Reading from the N-terminus, the 687-residue chain is Putative pentatricopeptide repeat-containing protein At3g15930 (687 aa).

PPR repeat units follow at residues Asp98–Pro132, Asp133–Ser168, Asn169–Glu199, Asp200–Pro234, Thr235–Pro269, Ser270–Ser304, Trp305–Arg331, Asp332–Pro366, Asp367–Asn401, Asp402–Arg432, Asp433–Pro467, Asp468–Asp498, and Ser504–Asn534. The segment at Val539 to Asn614 is type E motif. Positions Gly615–Thr645 are type E(+) motif.

Belongs to the PPR family. PCMP-E subfamily.

The polypeptide is Putative pentatricopeptide repeat-containing protein At3g15930 (PCMP-E51) (Arabidopsis thaliana (Mouse-ear cress)).